A 1069-amino-acid chain; its full sequence is Degenerin-like protein del-10 (1069 aa).

Residues Met-1–Gly-95 are Cytoplasmic-facing. A helical membrane pass occupies residues Leu-96–Ile-116. At Lys-117–Gly-830 the chain is on the extracellular side. N-linked (GlcNAc...) asparagine glycosylation is found at Asn-216, Asn-290, Asn-374, Asn-454, Asn-539, Asn-545, and Asn-584. A helical transmembrane segment spans residues Ala-831–Ile-851. Topologically, residues Gln-852 to Val-1069 are cytoplasmic. 2 disordered regions span residues Lys-898–Pro-948 and Arg-960–Val-1069. The segment covering Gly-915–Lys-928 has biased composition (basic and acidic residues). Over residues Asn-938–Pro-948 the composition is skewed to polar residues. The span at Tyr-967–Tyr-978 shows a compositional bias: basic and acidic residues.

It belongs to the amiloride-sensitive sodium channel (TC 1.A.6) family.

Its subcellular location is the membrane. This Caenorhabditis elegans protein is Degenerin-like protein del-10.